The primary structure comprises 452 residues: Pup--protein ligase 1 (452 aa).

Residue Glu-9 participates in Mg(2+) binding. Arg-53 contacts ATP. Tyr-55 contributes to the Mg(2+) binding site. Asp-57 serves as the catalytic Proton acceptor. Residue Glu-63 coordinates Mg(2+). ATP contacts are provided by Thr-66 and Trp-419.

Belongs to the Pup ligase/Pup deamidase family. Pup-conjugating enzyme subfamily.

It catalyses the reaction ATP + [prokaryotic ubiquitin-like protein]-L-glutamate + [protein]-L-lysine = ADP + phosphate + N(6)-([prokaryotic ubiquitin-like protein]-gamma-L-glutamyl)-[protein]-L-lysine.. The protein operates within protein degradation; proteasomal Pup-dependent pathway. It functions in the pathway protein modification; protein pupylation. Catalyzes the covalent attachment of the prokaryotic ubiquitin-like protein modifier Pup to the proteasomal substrate proteins, thereby targeting them for proteasomal degradation. This tagging system is termed pupylation. The ligation reaction involves the side-chain carboxylate of the C-terminal glutamate of Pup and the side-chain amino group of a substrate lysine. The sequence is that of Pup--protein ligase 1 from Rhodococcus erythropolis (Arthrobacter picolinophilus).